A 134-amino-acid chain; its full sequence is DNA-directed RNA polymerase subunit omega (134 aa).

Belongs to the RNA polymerase subunit omega family. The RNAP catalytic core consists of 2 alpha, 1 beta, 1 beta' and 1 omega subunit. When a sigma factor is associated with the core the holoenzyme is formed, which can initiate transcription.

It carries out the reaction RNA(n) + a ribonucleoside 5'-triphosphate = RNA(n+1) + diphosphate. Its function is as follows. Promotes RNA polymerase assembly. Latches the N- and C-terminal regions of the beta' subunit thereby facilitating its interaction with the beta and alpha subunits. The chain is DNA-directed RNA polymerase subunit omega from Brucella anthropi (strain ATCC 49188 / DSM 6882 / CCUG 24695 / JCM 21032 / LMG 3331 / NBRC 15819 / NCTC 12168 / Alc 37) (Ochrobactrum anthropi).